The following is a 434-amino-acid chain: Xylose isomerase (434 aa).

Active-site residues include His-100 and Asp-103. 7 residues coordinate Mg(2+): Glu-231, Glu-267, His-270, Asp-295, Asp-306, Asp-308, and Asp-338.

This sequence belongs to the xylose isomerase family. Homotetramer. It depends on Mg(2+) as a cofactor.

It localises to the cytoplasm. It carries out the reaction alpha-D-xylose = alpha-D-xylulofuranose. The protein is Xylose isomerase of Ruegeria pomeroyi (strain ATCC 700808 / DSM 15171 / DSS-3) (Silicibacter pomeroyi).